Here is a 301-residue protein sequence, read N- to C-terminus: Ribosomal RNA small subunit methyltransferase H (301 aa).

S-adenosyl-L-methionine is bound by residues 35–37 (GGH), Asp55, Phe84, Asp105, and Gln112.

It belongs to the methyltransferase superfamily. RsmH family.

Its subcellular location is the cytoplasm. It carries out the reaction cytidine(1402) in 16S rRNA + S-adenosyl-L-methionine = N(4)-methylcytidine(1402) in 16S rRNA + S-adenosyl-L-homocysteine + H(+). Functionally, specifically methylates the N4 position of cytidine in position 1402 (C1402) of 16S rRNA. The protein is Ribosomal RNA small subunit methyltransferase H of Chloroflexus aggregans (strain MD-66 / DSM 9485).